The following is a 324-amino-acid chain: Autolytic lysozyme (324 aa).

Active-site residues include Asp5 and Glu91. 5 tandem repeats follow at residues Leu212 to Phe234, Gln235 to Ala254, Gln255 to Ile277, Gln278 to Trp300, and Gln301 to Asn324. Positions Leu212–Asn324 are 5 X 23 AA tandem repeats.

It belongs to the glycosyl hydrolase 25 family. In terms of assembly, monomer.

Its subcellular location is the secreted. The protein localises to the cytoplasm. The enzyme catalyses Hydrolysis of (1-&gt;4)-beta-linkages between N-acetylmuramic acid and N-acetyl-D-glucosamine residues in a peptidoglycan and between N-acetyl-D-glucosamine residues in chitodextrins.. This chain is Autolytic lysozyme (lyc), found in Clostridium acetobutylicum (strain ATCC 824 / DSM 792 / JCM 1419 / IAM 19013 / LMG 5710 / NBRC 13948 / NRRL B-527 / VKM B-1787 / 2291 / W).